Here is a 752-residue protein sequence, read N- to C-terminus: DNA ligase (752 aa).

The interval 1–25 (MKRNGFVPSNSVGRRGIPSNSTSSA) is disordered. Residues 91–95 (DADFD), 140–141 (SL), and Glu170 each bind NAD(+). The active-site N6-AMP-lysine intermediate is Lys172. NAD(+) is bound by residues Arg193, Glu233, Lys350, and Lys374. Zn(2+) is bound by residues Cys474, Cys477, Cys493, and Cys499. A BRCT domain is found at 669–752 (STPRTLAGLT…TLLDGGPAAL (84 aa)).

Belongs to the NAD-dependent DNA ligase family. LigA subfamily. Mg(2+) is required as a cofactor. The cofactor is Mn(2+).

The enzyme catalyses NAD(+) + (deoxyribonucleotide)n-3'-hydroxyl + 5'-phospho-(deoxyribonucleotide)m = (deoxyribonucleotide)n+m + AMP + beta-nicotinamide D-nucleotide.. Functionally, DNA ligase that catalyzes the formation of phosphodiester linkages between 5'-phosphoryl and 3'-hydroxyl groups in double-stranded DNA using NAD as a coenzyme and as the energy source for the reaction. It is essential for DNA replication and repair of damaged DNA. This is DNA ligase from Nocardioides sp. (strain ATCC BAA-499 / JS614).